The primary structure comprises 269 residues: tRNA pseudouridine synthase A (269 aa).

The active-site Nucleophile is aspartate 51. Tyrosine 109 serves as a coordination point for substrate.

It belongs to the tRNA pseudouridine synthase TruA family. In terms of assembly, homodimer.

The catalysed reaction is uridine(38/39/40) in tRNA = pseudouridine(38/39/40) in tRNA. In terms of biological role, formation of pseudouridine at positions 38, 39 and 40 in the anticodon stem and loop of transfer RNAs. The sequence is that of tRNA pseudouridine synthase A from Histophilus somni (strain 129Pt) (Haemophilus somnus).